A 642-amino-acid polypeptide reads, in one-letter code: Threonine--tRNA ligase (642 aa).

Residues 1–61 (MPVITLPDGS…ETDAELSIIT (61 aa)) enclose the TGS domain. The tract at residues 243 to 534 (DHRKIGKQLD…LIEEYAGRFP (292 aa)) is catalytic. C334, H385, and H511 together coordinate Zn(2+).

The protein belongs to the class-II aminoacyl-tRNA synthetase family. In terms of assembly, homodimer. Zn(2+) is required as a cofactor.

It localises to the cytoplasm. It catalyses the reaction tRNA(Thr) + L-threonine + ATP = L-threonyl-tRNA(Thr) + AMP + diphosphate + H(+). Catalyzes the attachment of threonine to tRNA(Thr) in a two-step reaction: L-threonine is first activated by ATP to form Thr-AMP and then transferred to the acceptor end of tRNA(Thr). Also edits incorrectly charged L-seryl-tRNA(Thr). The sequence is that of Threonine--tRNA ligase from Shewanella baltica (strain OS155 / ATCC BAA-1091).